The primary structure comprises 216 residues: Uracil phosphoribosyltransferase (216 aa).

Residues arginine 85, arginine 110, and 135–143 (DPMVATGYS) contribute to the 5-phospho-alpha-D-ribose 1-diphosphate site. Uracil is bound by residues isoleucine 200 and 205 to 207 (GDA). Aspartate 206 serves as a coordination point for 5-phospho-alpha-D-ribose 1-diphosphate.

It belongs to the UPRTase family. Mg(2+) serves as cofactor.

It catalyses the reaction UMP + diphosphate = 5-phospho-alpha-D-ribose 1-diphosphate + uracil. Its pathway is pyrimidine metabolism; UMP biosynthesis via salvage pathway; UMP from uracil: step 1/1. With respect to regulation, allosterically activated by GTP. Catalyzes the conversion of uracil and 5-phospho-alpha-D-ribose 1-diphosphate (PRPP) to UMP and diphosphate. The sequence is that of Uracil phosphoribosyltransferase from Burkholderia lata (strain ATCC 17760 / DSM 23089 / LMG 22485 / NCIMB 9086 / R18194 / 383).